We begin with the raw amino-acid sequence, 255 residues long: Proteasome subunit alpha type-3 (255 aa).

Position 2 is an N-acetylserine (serine 2). An N6-acetyllysine mark is found at lysine 57, lysine 206, and lysine 230. Phosphoserine is present on residues serine 243 and serine 250.

It belongs to the peptidase T1A family. As to quaternary structure, the 26S proteasome consists of a 20S proteasome core and two 19S regulatory subunits. The 20S proteasome core is a barrel-shaped complex made of 28 subunits that are arranged in four stacked rings. The two outer rings are each formed by seven alpha subunits, and the two inner rings are formed by seven beta subunits. The proteolytic activity is exerted by three beta-subunits PSMB5, PSMB6 and PSMB7. Interacts with AURKB. Interacts with CDKN1A. Interacts with MDM2 and RB1. Interacts with the C-terminus of TBXA2R isoform 2. Interacts with DNAJB2.

It localises to the cytoplasm. The protein localises to the nucleus. Its function is as follows. Component of the 20S core proteasome complex involved in the proteolytic degradation of most intracellular proteins. This complex plays numerous essential roles within the cell by associating with different regulatory particles. Associated with two 19S regulatory particles, forms the 26S proteasome and thus participates in the ATP-dependent degradation of ubiquitinated proteins. The 26S proteasome plays a key role in the maintenance of protein homeostasis by removing misfolded or damaged proteins that could impair cellular functions, and by removing proteins whose functions are no longer required. Associated with the PA200 or PA28, the 20S proteasome mediates ubiquitin-independent protein degradation. This type of proteolysis is required in several pathways including spermatogenesis (20S-PA200 complex) or generation of a subset of MHC class I-presented antigenic peptides (20S-PA28 complex). Binds to the C-terminus of CDKN1A and thereby mediates its degradation. Negatively regulates the membrane trafficking of the cell-surface thromboxane A2 receptor (TBXA2R) isoform 2. The chain is Proteasome subunit alpha type-3 (PSMA3) from Bos taurus (Bovine).